The chain runs to 301 residues: CPX chromosomal region candidate gene 1 protein (301 aa).

Residues 1–77 (MSYPTKEGSD…ENSELETEIQ (77 aa)) form a disordered region. A compositionally biased stretch (polar residues) spans 44 to 60 (VETNPINREPGTATSQE).

In terms of tissue distribution, expressed in a variety of fetal tissues.

This is CPX chromosomal region candidate gene 1 protein (CPXCR1) from Homo sapiens (Human).